The following is a 309-amino-acid chain: Sulfate adenylyltransferase subunit 2 (309 aa).

Belongs to the PAPS reductase family. CysD subfamily. As to quaternary structure, heterodimer composed of CysD, the smaller subunit, and CysN.

The enzyme catalyses sulfate + ATP + H(+) = adenosine 5'-phosphosulfate + diphosphate. It participates in sulfur metabolism; hydrogen sulfide biosynthesis; sulfite from sulfate: step 1/3. Its function is as follows. With CysN forms the ATP sulfurylase (ATPS) that catalyzes the adenylation of sulfate producing adenosine 5'-phosphosulfate (APS) and diphosphate, the first enzymatic step in sulfur assimilation pathway. APS synthesis involves the formation of a high-energy phosphoric-sulfuric acid anhydride bond driven by GTP hydrolysis by CysN coupled to ATP hydrolysis by CysD. The protein is Sulfate adenylyltransferase subunit 2 of Methylorubrum extorquens (strain CM4 / NCIMB 13688) (Methylobacterium extorquens).